The sequence spans 391 residues: Zinc finger protein ubi-d4 (391 aa).

The residue at position 2 (alanine 2) is an N-acetylalanine. Residues lysine 10, lysine 99, lysine 107, and lysine 108 each participate in a glycyl lysine isopeptide (Lys-Gly) (interchain with G-Cter in SUMO2) cross-link. 2 disordered regions span residues 79–146 (WRKK…LGEF) and 165–196 (DDLDDEDYEEDTPKRRGKGKSKGKGVGSARKK). Basic and acidic residues-rich tracts occupy residues 100–110 (PDTDQTLKKEG) and 126–140 (DPLEKRGAPDPRVDD). A Phosphoserine modification is found at serine 142. Residues 165–174 (DDLDDEDYEE) are compositionally biased toward acidic residues. Tyrosine 172 bears the Phosphotyrosine mark. Phosphothreonine is present on threonine 176. Glycyl lysine isopeptide (Lys-Gly) (interchain with G-Cter in SUMO2) cross-links involve residues lysine 178 and lysine 196. Residue serine 200 is modified to Phosphoserine. A C2H2-type zinc finger spans residues 209 to 232 (YACDICGKRYKNRPGLSYHYAHSH). Residues 233–266 (LAEEEGEDKEDSQPPTPVSQRSEEQKSKKGPDGL) are disordered. Phosphoserine is present on serine 244. A compositionally biased stretch (basic and acidic residues) spans 253-263 (RSEEQKSKKGP). PHD-type zinc fingers lie at residues 270 to 330 (NNYC…CKCC) and 327 to 377 (CKCC…CLDL). Position 280 is a phosphoserine (serine 280). Lysine 281 participates in a covalent cross-link: Glycyl lysine isopeptide (Lys-Gly) (interchain with G-Cter in SUMO2).

The protein belongs to the requiem/DPF family. Interacts with the nucleosomes, in particular nucleosomes bearing histone H3 crotonylated at 'Lys-14' (H3K14cr) for which DPF2 has high affinity. Also interacts (via PHD-type zinc finger domains) with histone H3 butyrylated at 'Lys-14' (H3K14bu), histone H3 propionylated at 'Lys-14' (H3K14pr), and histone H3 acetylated at 'Lys-14' (H3K14ac). Interacts with histone H3 acetylated at 'Lys-9' (H3K9ac), histone H3 di-methylated at 'Lys-9' (H3K9me2), and histone H3 tri-methylated at 'Lys-9' (H3K9me3). Interacts with histone H4 acetylated at 'Lys-12' (H4K12ac). Interacts with histone H4 acetylated at 'Lys-16' (H4K16ac). Interacts with SWI/SNF complex components. Interacts with SMARCA2, SMARCA4, SMARCB1 and SMARCD1. Interacts with SMARCC1, SMARCC2 and ACTL6A. Interacts with RUNX1. As to expression, ubiquitous.

It is found in the nucleus. It localises to the cytoplasm. Its function is as follows. Plays an active role in transcriptional regulation by binding modified histones H3 and H4. Is a negative regulator of myeloid differentiation of hematopoietic progenitor cells. Might also have a role in the development and maturation of lymphoid cells. Involved in the regulation of non-canonical NF-kappa-B pathway. The sequence is that of Zinc finger protein ubi-d4 (DPF2) from Homo sapiens (Human).